Reading from the N-terminus, the 347-residue chain is MNPLIFIIIMFTLILGTVITMISSHWLLIWMGLEMNMFSMIPIIMMKSHPRSTEAATKYFMTQATASMLLMMGVIINLYYSGQWTIMNSLNPVTSYMMTIALAMKLGLAPFHFWVPEVTQGTQLTSGMILLTWQKLAPMTILYQIHSSLNLNLMLTLAILSILIGGWGGLNQTQLRKIMAYSSIAHMGWMTAIIMYNTSLMMLNLVIYLMMTITMFALFINSTTTTTLSLSLTWNSTPILTTMLLTTLLSLGGLPPLSGFAPKWMIIQEMTKNNMLLLPTTMAIMALLNLYFYMRLIYSTSLTMFPTTNNNKMKWKYKTQNFIPLSPTLITLSTMLIPLTPMMLILN.

10 helical membrane passes run 3-23, 26-46, 67-87, 96-116, 149-169, 178-198, 200-220, 239-259, 274-294, and 325-345; these read PLIF…TMIS, WLLI…IIMM, SMLL…WTIM, YMMT…FWVP, LNLN…GWGG, IMAY…MYNT, LMML…ALFI, ILTT…PLSG, NMLL…YFYM, and LSPT…MMLI.

It belongs to the complex I subunit 2 family. In terms of assembly, core subunit of respiratory chain NADH dehydrogenase (Complex I) which is composed of 45 different subunits. Interacts with TMEM242.

It localises to the mitochondrion inner membrane. The catalysed reaction is a ubiquinone + NADH + 5 H(+)(in) = a ubiquinol + NAD(+) + 4 H(+)(out). Functionally, core subunit of the mitochondrial membrane respiratory chain NADH dehydrogenase (Complex I) which catalyzes electron transfer from NADH through the respiratory chain, using ubiquinone as an electron acceptor. Essential for the catalytic activity and assembly of complex I. The protein is NADH-ubiquinone oxidoreductase chain 2 of Dasypus novemcinctus (Nine-banded armadillo).